Reading from the N-terminus, the 275-residue chain is Trypsin-3 (275 aa).

Positions 1-22 (MISNKIAILLAVLVVAVACAQA) are cleaved as a signal peptide. A propeptide spans 23-48 (RVALKHRSVQALPRFLPRPKYDVGHR) (activation peptide). The Peptidase S1 domain occupies 49–274 (IVGGFEIDVS…VRDWVRENSG (226 aa)). An intrachain disulfide couples C74 to C90. Residues H89 and D134 each act as charge relay system in the active site. Cystine bridges form between C199–C215 and C226–C250. S230 acts as the Charge relay system in catalysis.

Belongs to the peptidase S1 family. Expressed in the midgut. Expression levels drop a few hours after blood feeding and pick up again 28 hours later.

It localises to the secreted. It catalyses the reaction Preferential cleavage: Arg-|-Xaa, Lys-|-Xaa.. Constitutive trypsin that is expressed 2 days after emergence, coinciding with host seeking behavior of the female. The polypeptide is Trypsin-3 (TRYP3) (Anopheles gambiae (African malaria mosquito)).